We begin with the raw amino-acid sequence, 546 residues long: Chaperonin GroEL (546 aa).

Residues 29 to 32 (TLGP), Lys50, 86 to 90 (DGTTT), Gly414, and Asp494 contribute to the ATP site. The tract at residues 525–546 (KKESAAPAMPGHDGMGGMGGMM) is disordered. Residues 537 to 546 (DGMGGMGGMM) show a composition bias toward gly residues.

This sequence belongs to the chaperonin (HSP60) family. Forms a cylinder of 14 subunits composed of two heptameric rings stacked back-to-back. Interacts with the co-chaperonin GroES.

The protein resides in the cytoplasm. It carries out the reaction ATP + H2O + a folded polypeptide = ADP + phosphate + an unfolded polypeptide.. In terms of biological role, together with its co-chaperonin GroES, plays an essential role in assisting protein folding. The GroEL-GroES system forms a nano-cage that allows encapsulation of the non-native substrate proteins and provides a physical environment optimized to promote and accelerate protein folding. The chain is Chaperonin GroEL from Bdellovibrio bacteriovorus (strain ATCC 15356 / DSM 50701 / NCIMB 9529 / HD100).